Here is a 390-residue protein sequence, read N- to C-terminus: Neuromedin-B receptor (390 aa).

Residues 1-41 (MPPRSLSNLSFPTEANESELVPEVWEKDFLPDSDGTTAELV) lie on the Extracellular side of the membrane. Asparagine 8 and asparagine 16 each carry an N-linked (GlcNAc...) asparagine glycan. The chain crosses the membrane as a helical span at residues 42-65 (IRCVIPSLYLIIISVGLLGNIMLV). The Cytoplasmic segment spans residues 66–79 (KIFLTNSAMRNVPN). Residues 80–99 (IFISNLAAGDLLLLLTCVPV) traverse the membrane as a helical segment. Topologically, residues 100–117 (DASRYFFDEWVFGKLGCK) are extracellular. A disulfide bridge connects residues cysteine 116 and cysteine 198. A helical membrane pass occupies residues 118–139 (LIPAIQLTSVGVSVFTLTALSA). The Cytoplasmic segment spans residues 140–156 (DRYRAIVNPMDMQTSGV). Residues 157–177 (LLWTSLKAVGIWVVSVLLAVP) traverse the membrane as a helical segment. Residues 178-211 (EAVFSEVARIGSLDNSSFTACIPYPQTDELHPKI) are Extracellular-facing. Asparagine 192 is a glycosylation site (N-linked (GlcNAc...) asparagine). A helical membrane pass occupies residues 212–235 (HSVLIFLVYFLIPLVIISIYYYHI). The Cytoplasmic portion of the chain corresponds to 236–266 (AKTLIKSAHNLPGEYNEHTKKQMETRKRLAK). Residues 267 to 287 (IVLVFVGCFVFCWFPNHVLYL) form a helical membrane-spanning segment. Over 288-299 (YRSFNYKEIDPS) the chain is Extracellular. Residues 300 to 327 (LGHMIVTLVARVLSFSNSCVNPFALYLL) traverse the membrane as a helical segment. Over 328–390 (SESFRKHFNS…GHSTKQEIAL (63 aa)) the chain is Cytoplasmic. The S-palmitoyl cysteine moiety is linked to residue cysteine 341. Position 352 is a phosphoserine (serine 352).

The protein belongs to the G-protein coupled receptor 1 family. As to expression, expressed in a subset of neurons of the pre-Botzinger complex. Within the pre-Botzinger complex, there is some overlap with neurons expressing Grpr with some cells expressing only Grpr or Nmbr while some cells express both. Expressed in dorsal root ganglion neurons and mast cells. Expressed in lung.

It is found in the cell membrane. Receptor for neuromedin-B. Contributes to the maintenance of basal sigh rate through signaling in the pre-Botzinger complex, a cluster of several thousand neurons in the ventrolateral medulla responsible for inspiration during respiratory activity. Contributes to the induction of sneezing following exposure to chemical irritants or allergens which causes release of NMB by nasal sensory neurons and activation of NMBR-expressing neurons in the sneeze-evoking region of the brainstem. These in turn activate neurons of the caudal ventral respiratory group, giving rise to the sneezing response. Contributes to induction of acute itch, possibly through its activation on dorsal root ganglion neurons by the NMB peptide. Plays a role in the innate immune response to influenza A virus infection by enhancing interferon alpha expression and reducing expression of IL6. Plays a role in CSF1-induced proliferation of osteoclast precursors by contributing to the positive regulation of the expression of the CSF1 receptor CSF1R. The sequence is that of Neuromedin-B receptor (Nmbr) from Mus musculus (Mouse).